The chain runs to 89 residues: Helix-loop-helix protein 15 (89 aa).

Positions 1–32 (MLMEDGGLDTTSEEYRKLSKAERRKRRRATPK) are disordered. Residues 22–32 (ERRKRRRATPK) are compositionally biased toward basic residues. The tract at residues 32–45 (KYRNLHATRERIRV) is basic motif. The bHLH domain maps to 32–84 (KYRNLHATRERIRVESFNMAFSQLRALLPTLPVEKKLSKIEILRFSIAYISFL). A helix-loop-helix motif region spans residues 46–84 (ESFNMAFSQLRALLPTLPVEKKLSKIEILRFSIAYISFL).

Expressed in sensory head neurons of the lateral ganglion.

The protein resides in the nucleus. Its function is as follows. Transcription factor which binds the E box motif 5'-CA[TC][AG]TG-3'. Involved in modulating physiological aging, probably by regulating expression of branched-chain amino acid transferase-1, bcat-1. This Caenorhabditis elegans protein is Helix-loop-helix protein 15.